Here is a 203-residue protein sequence, read N- to C-terminus: Probable GTP-binding protein EngB (203 aa).

An EngB-type G domain is found at 24–199 (DGSEVAFAGR…HTVIETWLGL (176 aa)). Residues 32-39 (GRSNAGKS), 59-63 (GRTQQ), 77-80 (DLPG), 144-147 (TKAD), and 178-180 (FSS) contribute to the GTP site. Positions 39 and 61 each coordinate Mg(2+).

Belongs to the TRAFAC class TrmE-Era-EngA-EngB-Septin-like GTPase superfamily. EngB GTPase family. The cofactor is Mg(2+).

Necessary for normal cell division and for the maintenance of normal septation. The polypeptide is Probable GTP-binding protein EngB (Xylella fastidiosa (strain 9a5c)).